The primary structure comprises 304 residues: N-acetyl-D-glucosamine kinase (304 aa).

Residues 4–11 and 133–140 contribute to the ATP site; these read GFDMGGTK and GVGGGLIV. Residues H157, C177, C179, and C184 each contribute to the Zn(2+) site.

Belongs to the ROK (NagC/XylR) family. NagK subfamily.

The catalysed reaction is N-acetyl-D-glucosamine + ATP = N-acetyl-D-glucosamine 6-phosphate + ADP + H(+). Its pathway is cell wall biogenesis; peptidoglycan recycling. Functionally, catalyzes the phosphorylation of N-acetyl-D-glucosamine (GlcNAc) derived from cell-wall degradation, yielding GlcNAc-6-P. The chain is N-acetyl-D-glucosamine kinase from Yersinia pseudotuberculosis serotype IB (strain PB1/+).